The following is a 207-amino-acid chain: 2,3-bisphosphoglycerate-dependent phosphoglycerate mutase (207 aa).

Residues arginine 10 to asparagine 17, threonine 23 to glycine 24, arginine 62, glutamate 89 to tyrosine 92, lysine 100, arginine 116 to arginine 117, and glycine 160 to asparagine 161 contribute to the substrate site. Catalysis depends on histidine 11, which acts as the Tele-phosphohistidine intermediate. Glutamate 89 serves as the catalytic Proton donor/acceptor.

It belongs to the phosphoglycerate mutase family. BPG-dependent PGAM subfamily. As to quaternary structure, homodimer.

The enzyme catalyses (2R)-2-phosphoglycerate = (2R)-3-phosphoglycerate. It participates in carbohydrate degradation; glycolysis; pyruvate from D-glyceraldehyde 3-phosphate: step 3/5. In terms of biological role, catalyzes the interconversion of 2-phosphoglycerate and 3-phosphoglycerate. This is 2,3-bisphosphoglycerate-dependent phosphoglycerate mutase from Xanthobacter autotrophicus (strain ATCC BAA-1158 / Py2).